Consider the following 787-residue polypeptide: Vacuolar protein sorting-associated protein 35A (787 aa).

Met1 is subject to N-acetylmethionine.

This sequence belongs to the VPS35 family. In terms of assembly, component of the retromer complex which consists of VPS29 (MAG1), VPS26 (VPS26A or VPS26B), VPS35 (VPS35A or VPS35B or VPS35C), VPS5/17 (SNX1 or SNX2A or SNX2B). Component of a retromer subcomplex consisting of VPS29 (MAG1), VPS26 (VPS26A or VPS26B), VPS35 (VPS35A or VPS35B or VPS35C). Interacts with RABG3F.

The protein localises to the cytoplasm. The protein resides in the endosome membrane. It localises to the prevacuolar compartment membrane. Its subcellular location is the golgi apparatus. It is found in the trans-Golgi network membrane. Its function is as follows. Plays a role in vesicular protein sorting. Component of the membrane-associated retromer complex which is essential in endosome-to-Golgi retrograde transport. Also involved in the efficient sorting of seed storage proteins. Binds alone to endosomal membranes and is required for recruitment of VPS26 and VPS29 to membrane. The VPS29-VPS26-VPS35 subcomplex may be involved in recycling of specific cargos from endosome to the plasma membrane. This Arabidopsis thaliana (Mouse-ear cress) protein is Vacuolar protein sorting-associated protein 35A (VPS35A).